The primary structure comprises 511 residues: Bifunctional purine biosynthesis protein PurH (511 aa).

The MGS-like domain occupies 1 to 144 (MKTALLSVSD…KNFASVLPVV (144 aa)).

Belongs to the PurH family.

It carries out the reaction (6R)-10-formyltetrahydrofolate + 5-amino-1-(5-phospho-beta-D-ribosyl)imidazole-4-carboxamide = 5-formamido-1-(5-phospho-D-ribosyl)imidazole-4-carboxamide + (6S)-5,6,7,8-tetrahydrofolate. The enzyme catalyses IMP + H2O = 5-formamido-1-(5-phospho-D-ribosyl)imidazole-4-carboxamide. The protein operates within purine metabolism; IMP biosynthesis via de novo pathway; 5-formamido-1-(5-phospho-D-ribosyl)imidazole-4-carboxamide from 5-amino-1-(5-phospho-D-ribosyl)imidazole-4-carboxamide (10-formyl THF route): step 1/1. Its pathway is purine metabolism; IMP biosynthesis via de novo pathway; IMP from 5-formamido-1-(5-phospho-D-ribosyl)imidazole-4-carboxamide: step 1/1. The chain is Bifunctional purine biosynthesis protein PurH from Pediococcus pentosaceus (strain ATCC 25745 / CCUG 21536 / LMG 10740 / 183-1w).